The chain runs to 437 residues: Double-stranded RNA-binding protein 3 (437 aa).

Positions 1–22 (MKKKSAPTPLPPETANTSPAPI) are disordered. DRBM domains lie at 35-104 (VFKS…EIVK) and 120-187 (LCKN…AIQG). 2 stretches are compositionally biased toward basic and acidic residues: residues 288-310 (AKRV…ENQH) and 320-330 (DEARVEQEPSR). Residues 288-331 (AKRVEDEPPRDIEMVQPDKENQHSDAALVQPDDEARVEQEPSRD) form a disordered region.

Functionally, binds double-stranded RNA. The polypeptide is Double-stranded RNA-binding protein 3 (DRB3) (Oryza sativa subsp. japonica (Rice)).